We begin with the raw amino-acid sequence, 245 residues long: Ribonuclease PH (245 aa).

Phosphate-binding positions include R86 and 124–126 (GTR).

The protein belongs to the RNase PH family. As to quaternary structure, homohexameric ring arranged as a trimer of dimers. It has been suggested that the active form is the dimer which binds tRNA and that the hexameric form protects the substrate recognition loop (approximately residues 65-82) from proteolysis.

It catalyses the reaction tRNA(n+1) + phosphate = tRNA(n) + a ribonucleoside 5'-diphosphate. In terms of biological role, phosphorolytic 3'-5' exoribonuclease that plays an important role in tRNA 3'-end maturation. Removes nucleotide residues following the 3'-CCA terminus of tRNAs; can also add nucleotides to the ends of RNA molecules by using nucleoside diphosphates as substrates, but this may not be physiologically important. Probably plays a role in initiation of 16S rRNA degradation (leading to ribosome degradation) during starvation. Plays a role in the secondary pathway of 23S rRNA 3' end maturation. This is Ribonuclease PH from Bacillus subtilis (strain 168).